The primary structure comprises 158 residues: MQSHLSAWLVKHELVHRSLGFDYQGIETLQIKPEDWDSIAVISYVYGYNYLRSQCAYDVAPGGFLASVYHLTRIQYGVDQPEEVCIKVFVPRENPIVPSVFWVWRSADFQERESYDMFGISYDNHPRLKRILMPESWIGWPLRKDYITPNFYEIQDAH.

Belongs to the complex I 30 kDa subunit family. In terms of assembly, NDH is composed of at least 16 different subunits, 5 of which are encoded in the nucleus.

The protein resides in the plastid. It is found in the chloroplast thylakoid membrane. The enzyme catalyses a plastoquinone + NADH + (n+1) H(+)(in) = a plastoquinol + NAD(+) + n H(+)(out). The catalysed reaction is a plastoquinone + NADPH + (n+1) H(+)(in) = a plastoquinol + NADP(+) + n H(+)(out). Its function is as follows. NDH shuttles electrons from NAD(P)H:plastoquinone, via FMN and iron-sulfur (Fe-S) centers, to quinones in the photosynthetic chain and possibly in a chloroplast respiratory chain. The immediate electron acceptor for the enzyme in this species is believed to be plastoquinone. Couples the redox reaction to proton translocation, and thus conserves the redox energy in a proton gradient. The sequence is that of NAD(P)H-quinone oxidoreductase subunit J, chloroplastic from Lemna minor (Common duckweed).